Here is a 583-residue protein sequence, read N- to C-terminus: MTTPAGSGNGFGTVSWWGLSPALDLQAESPPVDPDSQSKTEHKIPELDALLLGSVDGRHMLRTLARAMLWPLRRFNFYVLENNLEAVARHMLIFSLALEEPEKMGLQERSETFLELWGNALLRPSVAAFLRAQASHLSNLVPEPDRLEELLPWLSLRPLKFRERDALEAVFRFWSGGEKGPEVFPMSRLWDSRLRHYLGSRYDARRGVADWDLRMKLHDRGAQVIHFHEFRRWRDTGVAFELRDLSAYHVPNRTMASGRLLSHRGERVAARGYWGDIATGPFVAFGIEADDKSLLRTSNGQPVKTASEITQHNVTELFRDVAAWRGPRAIKGNVEETKSPEPDAPAQEPFTIHFLPLDSSQTLHHKTCYRGRFQLLYVSCGMIHLLSPELGACVAPGGNLVVELARYLVDLRPKELKAFSDRVVEIAQAAGFAPHTGTKPSETFARFYKLGDSTRGGGDSAVESGPVPSKVLAPTPESINPPQADQAPSLEVMSPPKVDQTPPLEAMSPPEADQAPPLEAMSPPRADQIPPLEAMSPLQAEVVLPLEAISPPQADLAPPPEVISPVQEALAMSSAIAPLKHVT.

The interval 455–534 (RGGGDSAVES…RADQIPPLEA (80 aa)) is disordered.

Belongs to the DNAAF3 family.

It localises to the cytoplasm. It is found in the dynein axonemal particle. In terms of biological role, required for the assembly of axonemal inner and outer dynein arms. Involved in preassembly of dyneins into complexes before their transport into cilia. The protein is Dynein axonemal assembly factor 3 (Dnaaf3) of Rattus norvegicus (Rat).